A 139-amino-acid chain; its full sequence is MTAPEQTYRNKKQRKQQHKLRRPGYAIAKYVRMSPRKVRLVVDVIRGKSVAEAEDLLRFIPRAASEPVAKVLKSAKSNAINNDEMLEDRLVVAAAYVDAGPTLKRLLPRARGSANIIKKRTSHITIIVAERESLSRKGS.

The disordered stretch occupies residues 1 to 21 (MTAPEQTYRNKKQRKQQHKLR). Residues 9–21 (RNKKQRKQQHKLR) show a composition bias toward basic residues.

It belongs to the universal ribosomal protein uL22 family. As to quaternary structure, part of the 50S ribosomal subunit.

Functionally, this protein binds specifically to 23S rRNA; its binding is stimulated by other ribosomal proteins, e.g. L4, L17, and L20. It is important during the early stages of 50S assembly. It makes multiple contacts with different domains of the 23S rRNA in the assembled 50S subunit and ribosome. In terms of biological role, the globular domain of the protein is located near the polypeptide exit tunnel on the outside of the subunit, while an extended beta-hairpin is found that lines the wall of the exit tunnel in the center of the 70S ribosome. In Deinococcus geothermalis (strain DSM 11300 / CIP 105573 / AG-3a), this protein is Large ribosomal subunit protein uL22.